A 244-amino-acid chain; its full sequence is Dehydration-responsive element-binding protein 2E (244 aa).

The segment at 1–25 (MEKEDNGSKQSSSASVVSSRRRRRV) is disordered. The Nuclear localization signal motif lies at 20-46 (RRRRRVVEPVEATLQRWEEEGLARARR). Positions 69–134 (RFRGVRQRVW…YGPYARLNFP (66 aa)) form a DNA-binding region, AP2/ERF.

The protein belongs to the AP2/ERF transcription factor family. ERF subfamily. Expressed in xylem tissues, stigma, anthers and region where sepals and petals attach the peduncle.

It is found in the nucleus. Functionally, transcriptional activator that binds specifically to the DNA sequence 5'-[AG]CCGAC-3'. Binding to the C-repeat/DRE element mediates abscisic acid-inducible transcription. Involved in the regulation of plant development and tolerance to abiotic stresses. The sequence is that of Dehydration-responsive element-binding protein 2E (DREB2E) from Arabidopsis thaliana (Mouse-ear cress).